We begin with the raw amino-acid sequence, 526 residues long: ATP synthase subunit alpha (526 aa).

Residue 171 to 178 (GDRQTGKT) participates in ATP binding.

Belongs to the ATPase alpha/beta chains family. F-type ATPases have 2 components, CF(1) - the catalytic core - and CF(0) - the membrane proton channel. CF(1) has five subunits: alpha(3), beta(3), gamma(1), delta(1), epsilon(1). CF(0) has four main subunits: a(1), b(1), b'(1) and c(9-12).

It is found in the cell inner membrane. It catalyses the reaction ATP + H2O + 4 H(+)(in) = ADP + phosphate + 5 H(+)(out). In terms of biological role, produces ATP from ADP in the presence of a proton gradient across the membrane. The alpha chain is a regulatory subunit. This Chlorobium phaeobacteroides (strain DSM 266 / SMG 266 / 2430) protein is ATP synthase subunit alpha.